The primary structure comprises 184 residues: UPF0397 protein SAB2561c (184 aa).

5 consecutive transmembrane segments (helical) span residues V11 to P31, A44 to V64, A77 to L97, M111 to P131, and Q148 to L168.

Belongs to the UPF0397 family.

The protein resides in the cell membrane. This is UPF0397 protein SAB2561c from Staphylococcus aureus (strain bovine RF122 / ET3-1).